A 541-amino-acid chain; its full sequence is Protein wntless homolog A (541 aa).

The N-terminal stretch at 1-28 (MAGAIIENMSTKKLCMVGVALLLLQVLA) is a signal peptide. Residues 29-232 (FLVGGLIAPK…SIFQNGGFTM (204 aa)) lie on the Lumenal side of the membrane. The helical transmembrane segment at 233–253 (VWFAMKTFLTPSIIIIMIWYW) threads the bilayer. Residues 254 to 268 (RRITMMTRSPVLLEK) lie on the Cytoplasmic side of the membrane. A helical membrane pass occupies residues 269-289 (VIFALGFSMTFINIPVEWFSI). Topologically, residues 290 to 303 (GYDWTWMLLFGDIR) are lumenal. A helical membrane pass occupies residues 304 to 324 (QGIFYAMLLSFWIIFCGEHMM). Over 325-331 (DQTERNR) the chain is Cytoplasmic. Residues 332–352 (ISVYWKQVGPIAFGSCCLFIF) form a helical membrane-spanning segment. Topologically, residues 353-379 (DMCERGVQLKNPFYSIWTTDVGAEIAM) are lumenal. The chain crosses the membrane as a helical span at residues 380–400 (AFIIVAGICACLYFLFLCFMV). Over 401 to 431 (YQVFRNISGKQSNLPAMTKARRLHYEGLIFR) the chain is Cytoplasmic. A helical transmembrane segment spans residues 432-452 (FKFLMIITLACAALTIVFFIT). At 453-471 (TQITEGNWKLGDLSIELNS) the chain is on the lumenal side. Residues 472-492 (AFFTGVYGMWNLYVFALMFLY) form a helical membrane-spanning segment. Topologically, residues 493–541 (APSHKHYGDGQSNDGAGMSSGEELQLTTTITHIDGPTEVYRLAGKEAQE) are cytoplasmic.

This sequence belongs to the wntless family.

Its subcellular location is the golgi apparatus membrane. The protein resides in the cytoplasmic vesicle membrane. Its function is as follows. Required for a subset of Wnt-dependent developmental processes, in particular, eye and pronephros development. Regulates the secretion of wnt4, which is required for eye development. The chain is Protein wntless homolog A (wls-a) from Xenopus laevis (African clawed frog).